A 627-amino-acid polypeptide reads, in one-letter code: Neutral endopeptidase (627 aa).

The Peptidase M13 domain occupies 1–627; the sequence is MTRIQDDLFA…RAPENRLKIW (627 aa). Histidine 475 contributes to the Zn(2+) binding site. Glutamate 476 is a catalytic residue. The Zn(2+) site is built by histidine 479 and glutamate 535. Catalysis depends on aspartate 539, which acts as the Proton donor.

Belongs to the peptidase M13 family. As to quaternary structure, monomer. Requires Zn(2+) as cofactor.

Its subcellular location is the cytoplasm. Endopeptidase with broad substrate specificity for several oligopeptides. The protein is Neutral endopeptidase (pepO) of Lactococcus lactis subsp. cremoris (Streptococcus cremoris).